The sequence spans 80 residues: RNA-binding protein Hfq (80 aa).

One can recognise a Sm domain in the interval D10 to V69.

It belongs to the Hfq family. Homohexamer.

Its function is as follows. RNA chaperone that binds small regulatory RNA (sRNAs) and mRNAs to facilitate mRNA translational regulation in response to envelope stress, environmental stress and changes in metabolite concentrations. Also binds with high specificity to tRNAs. The chain is RNA-binding protein Hfq from Nitrosomonas eutropha (strain DSM 101675 / C91 / Nm57).